The chain runs to 802 residues: Leucine--tRNA ligase (802 aa).

Residues 40–51 carry the 'HIGH' region motif; sequence PYPSGAGLHVGH. The 'KMSKS' region motif lies at 576 to 580; that stretch reads KMSKS. Position 579 (K579) interacts with ATP.

The protein belongs to the class-I aminoacyl-tRNA synthetase family.

The protein localises to the cytoplasm. It catalyses the reaction tRNA(Leu) + L-leucine + ATP = L-leucyl-tRNA(Leu) + AMP + diphosphate. The sequence is that of Leucine--tRNA ligase from Bacillus mycoides (strain KBAB4) (Bacillus weihenstephanensis).